The chain runs to 893 residues: TBC domain-containing protein kinase-like protein (893 aa).

Residues 1 to 274 (MFPLRDTEMG…EELMHDHLFS (274 aa)) enclose the Protein kinase domain. A Rab-GAP TBC domain is found at 466 to 651 (DIPPLLRGIT…HLWDTLLLGN (186 aa)). Positions 790–889 (SKPKLLVVDI…IKPTGLLTVP (100 aa)) constitute a Rhodanese domain.

This sequence belongs to the protein kinase superfamily. In terms of assembly, component of the FERRY complex.

The protein resides in the cytoplasm. It localises to the cytoskeleton. The protein localises to the spindle. It is found in the midbody. Its subcellular location is the early endosome. Its function is as follows. Component of the FERRY complex (Five-subunit Endosomal Rab5 and RNA/ribosome intermediary). The FERRY complex directly interacts with mRNAs and RAB5A, and functions as a RAB5A effector involved in the localization and the distribution of specific mRNAs most likely by mediating their endosomal transport. The complex recruits mRNAs and ribosomes to early endosomes through direct mRNA-interaction. Also involved in the modulation of mTOR signaling and expression of mTOR complex components. Involved in the control of actin-cytoskeleton organization. This Gallus gallus (Chicken) protein is TBC domain-containing protein kinase-like protein.